The primary structure comprises 429 residues: Ribosomal RNA small subunit methyltransferase B (429 aa).

Residues C254 to K260, D277, D303, and D322 contribute to the S-adenosyl-L-methionine site. C375 functions as the Nucleophile in the catalytic mechanism. The disordered stretch occupies residues A397–D419. The span at E400–L412 shows a compositional bias: polar residues.

Belongs to the class I-like SAM-binding methyltransferase superfamily. RsmB/NOP family.

It is found in the cytoplasm. The enzyme catalyses cytidine(967) in 16S rRNA + S-adenosyl-L-methionine = 5-methylcytidine(967) in 16S rRNA + S-adenosyl-L-homocysteine + H(+). Its function is as follows. Specifically methylates the cytosine at position 967 (m5C967) of 16S rRNA. The chain is Ribosomal RNA small subunit methyltransferase B from Salmonella choleraesuis (strain SC-B67).